The chain runs to 102 residues: MKIIREAMAGTLESSDVMVRIAPAEGPEHDLLIASSVEKQFGEAIRQTLLQVLQHYQVEPVQVMVDDKGALDCVLRARLETALMRACDNGQLPWGAPNENAE.

Serine 14 carries the O-(phosphoribosyl dephospho-coenzyme A)serine modification.

It belongs to the CitD family. Oligomer with a subunit composition of (alpha,beta,gamma)6.

It localises to the cytoplasm. In terms of biological role, covalent carrier of the coenzyme of citrate lyase. This Serratia proteamaculans (strain 568) protein is Citrate lyase acyl carrier protein.